We begin with the raw amino-acid sequence, 86 residues long: Muscarinic toxin 7 (86 aa).

The first 21 residues, 1–21 (MKTLLLTLVVVTIVCLDLGYT), serve as a signal peptide directing secretion. Finger loop regions lie at residues 23–37 (TCVK…TSED), 44–63 (LCFK…TRGC), and 66–78 (TCPK…VINC). Disulfide bonds link C24–C45, C38–C63, C67–C78, and C79–C84.

Belongs to the three-finger toxin family. Short-chain subfamily. Aminergic toxin sub-subfamily. Expressed by the venom gland.

The protein resides in the secreted. Its function is as follows. Binds specifically and irreversibly to an allosteric site of the muscarinic acetylcholine M1 receptor (CHRM1) at subnanomolar concentrations and shows a very slow dissociation rate. It also inhibits agonist-mediated guanosine 5'-O-(3'-thiotriphosphate) (GTP-g-S) binding and downstream signaling, and decreases the dissociation rate of orthosteric antagonists (N-methylscopolamine (NMS) or pirenzepine). Is a potent negative allosteric modulator (NAM) for CHRM1 activation and a positive allosteric modulator (PAM) for antagonist binding. This is Muscarinic toxin 7 from Dendroaspis angusticeps (Eastern green mamba).